A 305-amino-acid chain; its full sequence is tRNA dimethylallyltransferase (305 aa).

11–18 (GPTAVGKT) lines the ATP pocket. A substrate-binding site is contributed by 13–18 (TAVGKT). The tract at residues 36 to 39 (DSMQ) is interaction with substrate tRNA.

The protein belongs to the IPP transferase family. In terms of assembly, monomer. It depends on Mg(2+) as a cofactor.

The catalysed reaction is adenosine(37) in tRNA + dimethylallyl diphosphate = N(6)-dimethylallyladenosine(37) in tRNA + diphosphate. Catalyzes the transfer of a dimethylallyl group onto the adenine at position 37 in tRNAs that read codons beginning with uridine, leading to the formation of N6-(dimethylallyl)adenosine (i(6)A). The chain is tRNA dimethylallyltransferase from Listeria innocua serovar 6a (strain ATCC BAA-680 / CLIP 11262).